The primary structure comprises 441 residues: tRNA-2-methylthio-N(6)-dimethylallyladenosine synthase (441 aa).

The 116-residue stretch at 2–117 folds into the MTTase N-terminal domain; the sequence is KGLYIKSYGC…LPELLVKAHR (116 aa). C11, C47, C80, C157, C161, and C164 together coordinate [4Fe-4S] cluster. In terms of domain architecture, Radical SAM core spans 143–374; the sequence is KNQETSAFIS…QKLLREQQLA (232 aa).

The protein belongs to the methylthiotransferase family. MiaB subfamily. As to quaternary structure, monomer. Requires [4Fe-4S] cluster as cofactor.

It is found in the cytoplasm. The enzyme catalyses N(6)-dimethylallyladenosine(37) in tRNA + (sulfur carrier)-SH + AH2 + 2 S-adenosyl-L-methionine = 2-methylsulfanyl-N(6)-dimethylallyladenosine(37) in tRNA + (sulfur carrier)-H + 5'-deoxyadenosine + L-methionine + A + S-adenosyl-L-homocysteine + 2 H(+). Its function is as follows. Catalyzes the methylthiolation of N6-(dimethylallyl)adenosine (i(6)A), leading to the formation of 2-methylthio-N6-(dimethylallyl)adenosine (ms(2)i(6)A) at position 37 in tRNAs that read codons beginning with uridine. The protein is tRNA-2-methylthio-N(6)-dimethylallyladenosine synthase of Ehrlichia canis (strain Jake).